A 224-amino-acid polypeptide reads, in one-letter code: Urease accessory protein UreF (224 aa).

This sequence belongs to the UreF family. In terms of assembly, ureD, UreF and UreG form a complex that acts as a GTP-hydrolysis-dependent molecular chaperone, activating the urease apoprotein by helping to assemble the nickel containing metallocenter of UreC. The UreE protein probably delivers the nickel.

Its subcellular location is the cytoplasm. Its function is as follows. Required for maturation of urease via the functional incorporation of the urease nickel metallocenter. This chain is Urease accessory protein UreF, found in Escherichia coli O157:H7.